Reading from the N-terminus, the 132-residue chain is ATP synthase epsilon chain (132 aa).

This sequence belongs to the ATPase epsilon chain family. In terms of assembly, F-type ATPases have 2 components, CF(1) - the catalytic core - and CF(0) - the membrane proton channel. CF(1) has five subunits: alpha(3), beta(3), gamma(1), delta(1), epsilon(1). CF(0) has four main subunits: a, b, b' and c.

It is found in the cellular chromatophore membrane. Functionally, produces ATP from ADP in the presence of a proton gradient across the membrane. The sequence is that of ATP synthase epsilon chain (atpC) from Rhodobacter capsulatus (Rhodopseudomonas capsulata).